A 584-amino-acid chain; its full sequence is Probable pectinesterase/pectinesterase inhibitor (584 aa).

An N-terminal signal peptide occupies residues 1-22 (MAVGKIVISVASMLLVVGVAIG). Residues 40-191 (NSHQKAVESL…KILSSNAIDI (152 aa)) form a pectinesterase inhibitor region. N-linked (GlcNAc...) asparagine glycosylation is found at N91 and N105. The tract at residues 246-267 (AQAGRPGAPADEGIGEGGGGGG) is disordered. The tract at residues 272–571 (THVVAKDGSG…TVANWLTPAN (300 aa)) is pectinesterase. Substrate-binding residues include T349 and Q379. Catalysis depends on D402, which acts as the Proton donor; for pectinesterase activity. The Nucleophile; for pectinesterase activity role is filled by D423. Substrate is bound by residues R492 and W494.

It in the N-terminal section; belongs to the PMEI family. In the C-terminal section; belongs to the pectinesterase family. Pollen, and at much lower levels in pistils and petals.

The protein localises to the secreted. The protein resides in the cell wall. The enzyme catalyses [(1-&gt;4)-alpha-D-galacturonosyl methyl ester](n) + n H2O = [(1-&gt;4)-alpha-D-galacturonosyl](n) + n methanol + n H(+). It participates in glycan metabolism; pectin degradation; 2-dehydro-3-deoxy-D-gluconate from pectin: step 1/5. Functionally, acts in the modification of cell walls via demethylesterification of cell wall pectin. The polypeptide is Probable pectinesterase/pectinesterase inhibitor (BP19) (Brassica napus (Rape)).